The following is a 90-amino-acid chain: Putative transcript Y 12 protein (90 aa).

The sequence is that of Putative transcript Y 12 protein (TTTY12) from Homo sapiens (Human).